We begin with the raw amino-acid sequence, 402 residues long: Alkaline proteinase (402 aa).

Positions 1–20 (MVTLRRLAVLLGAIPAALAA) are cleaved as a signal peptide. The propeptide occupies 21–120 (PTTQKREVVP…EQDEGEFSTA (100 aa)). The Inhibitor I9 domain maps to 32–108 (KYIVTLKEGA…EVEEDQIWHL (77 aa)). The region spanning 128 to 402 (AWGLGTISHR…NRILYNGNGA (275 aa)) is the Peptidase S8 domain. Residues D160, H191, and S347 each act as charge relay system in the active site. Positions 382–392 (GRVSNPGSGSP) are enriched in polar residues. Residues 382–402 (GRVSNPGSGSPNRILYNGNGA) form a disordered region.

Belongs to the peptidase S8 family.

The chain is Alkaline proteinase (ALP) from Hapsidospora chrysogena (Acremonium chrysogenum).